Consider the following 569-residue polypeptide: uncharacterized protein (569 aa).

The N-terminal stretch at Met1–Ala24 is a signal peptide. Cys25 carries the N-palmitoyl cysteine lipid modification. Cys25 is lipidated: S-diacylglycerol cysteine. 2 disordered regions span residues Ser111–Val137 and Gly242–Glu267. Composition is skewed to low complexity over residues Ser119–Ser130 and Lys249–Gln260.

This sequence to M.pneumoniae MPN_456 and M.genitalium MG321 N-terminal region.

Its subcellular location is the cell membrane. This is an uncharacterized protein from Mycoplasma pneumoniae (strain ATCC 29342 / M129 / Subtype 1) (Mycoplasmoides pneumoniae).